Here is a 579-residue protein sequence, read N- to C-terminus: XK-related protein 7 (579 aa).

The segment covering 1–18 has biased composition (low complexity); it reads MAAKSDGAAASASPDPEG. The disordered stretch occupies residues 1 to 40; that stretch reads MAAKSDGAAASASPDPEGAAGGARGSAGGRGEAAAAAGPP. Over residues 19–31 the composition is skewed to gly residues; it reads AAGGARGSAGGRG. A run of 2 helical transmembrane segments spans residues 59–79 and 89–109; these read WVLCALLVFFSDGATDLWLAA and YFSLTLLFVLLPSLVVQLLSF. The interval 146–165 is disordered; the sequence is GAFRTKEGSPEPGPQPAPSS. A run of 5 helical transmembrane segments spans residues 260–280, 314–334, 355–375, 384–404, and 415–435; these read LLPALSTSASLVSLAWTLASY, GLAFALFASVYKLYFGIFIVA, WEEIIYNMVVGIIYIFCWFNV, MTLYHCIVLLENAALTGFWYS, and LIMVCVVASSFALGIFFMCVY. A disordered region spans residues 466-510; that stretch reads ADAITSPPRSLPRTTGAERDGASAGERAGTPTPPVFQVRPGLPPT.

This sequence belongs to the XK family.

The protein resides in the cell membrane. This chain is XK-related protein 7, found in Homo sapiens (Human).